Here is a 342-residue protein sequence, read N- to C-terminus: Lipopolysaccharide heptosyltransferase 1 (342 aa).

8 residues coordinate ADP-L-glycero-beta-D-manno-heptose: S188, S189, K193, E225, D268, S269, G270, and H273.

It belongs to the glycosyltransferase 9 family.

The protein localises to the cell inner membrane. The catalysed reaction is an alpha-Kdo-(2-&gt;4)-alpha-Kdo-(2-&gt;6)-lipid A + ADP-L-glycero-beta-D-manno-heptose = an L-alpha-D-Hep-(1-&gt;5)-[alpha-Kdo-(2-&gt;4)]-alpha-Kdo-(2-&gt;6)-lipid A + ADP + H(+). The protein operates within bacterial outer membrane biogenesis; LPS core biosynthesis. Glycosyltransferase involved in the biosynthesis of the core oligosaccharide region of lipopolysaccharide (LPS). Catalyzes the addition of the first heptose unit to one 3-deoxy-D-manno-octulosonic acid (Kdo) residue of the Kdo2-lipid A module. The polypeptide is Lipopolysaccharide heptosyltransferase 1 (Campylobacter coli).